Reading from the N-terminus, the 445-residue chain is Tubulin beta-9 chain (445 aa).

Residues Q11, E69, S138, G142, T143, G144, N204, and N226 each coordinate GTP. E69 is a binding site for Mg(2+). Residues Q423–A445 are disordered. Residues T429–A445 are compositionally biased toward acidic residues.

The protein belongs to the tubulin family. As to quaternary structure, dimer of alpha and beta chains. A typical microtubule is a hollow water-filled tube with an outer diameter of 25 nm and an inner diameter of 15 nM. Alpha-beta heterodimers associate head-to-tail to form protofilaments running lengthwise along the microtubule wall with the beta-tubulin subunit facing the microtubule plus end conferring a structural polarity. Microtubules usually have 13 protofilaments but different protofilament numbers can be found in some organisms and specialized cells. Mg(2+) serves as cofactor.

The protein resides in the cytoplasm. Its subcellular location is the cytoskeleton. In terms of biological role, tubulin is the major constituent of microtubules, a cylinder consisting of laterally associated linear protofilaments composed of alpha- and beta-tubulin heterodimers. Microtubules grow by the addition of GTP-tubulin dimers to the microtubule end, where a stabilizing cap forms. Below the cap, tubulin dimers are in GDP-bound state, owing to GTPase activity of alpha-tubulin. The protein is Tubulin beta-9 chain of Gossypium hirsutum (Upland cotton).